Reading from the N-terminus, the 985-residue chain is UPF0182 protein cgR_0895 (985 aa).

7 consecutive transmembrane segments (helical) span residues 19-39, 63-83, 115-135, 176-196, 215-235, 262-282, and 290-310; these read VTWI…SVGF, IVLF…AGYF, VMVL…QRSW, SMML…MGGI, TQLA…YWLD, KIIL…AIFL, and LAVV…PLML. The interval 906-944 is disordered; it reads AQDIEEVDGTTTTPSTDETDTDTDQPATETPTAPVSEAE. The span at 929–939 shows a compositional bias: low complexity; sequence DQPATETPTAP.

It belongs to the UPF0182 family.

Its subcellular location is the cell membrane. This Corynebacterium glutamicum (strain R) protein is UPF0182 protein cgR_0895.